The sequence spans 129 residues: Small ribosomal subunit protein uS11 (129 aa).

The protein belongs to the universal ribosomal protein uS11 family. In terms of assembly, part of the 30S ribosomal subunit. Interacts with proteins S7 and S18. Binds to IF-3.

Its function is as follows. Located on the platform of the 30S subunit, it bridges several disparate RNA helices of the 16S rRNA. Forms part of the Shine-Dalgarno cleft in the 70S ribosome. This Idiomarina loihiensis (strain ATCC BAA-735 / DSM 15497 / L2-TR) protein is Small ribosomal subunit protein uS11.